A 450-amino-acid chain; its full sequence is ATP-dependent protease ATPase subunit HslU (450 aa).

ATP is bound by residues valine 29, 71–76, aspartate 261, glutamate 328, and arginine 400; that span reads GVGKTE.

This sequence belongs to the ClpX chaperone family. HslU subfamily. A double ring-shaped homohexamer of HslV is capped on each side by a ring-shaped HslU homohexamer. The assembly of the HslU/HslV complex is dependent on binding of ATP.

The protein localises to the cytoplasm. Its function is as follows. ATPase subunit of a proteasome-like degradation complex; this subunit has chaperone activity. The binding of ATP and its subsequent hydrolysis by HslU are essential for unfolding of protein substrates subsequently hydrolyzed by HslV. HslU recognizes the N-terminal part of its protein substrates and unfolds these before they are guided to HslV for hydrolysis. This is ATP-dependent protease ATPase subunit HslU from Rickettsia rickettsii (strain Iowa).